Here is a 428-residue protein sequence, read N- to C-terminus: Stromal membrane-associated protein 2 (428 aa).

The region spanning 13-139 is the Arf-GAP domain; that stretch reads QAVLGSLLSE…INTFRKEKDD (127 aa). The C4-type zinc finger occupies 28 to 51; sequence CADCQAKGPRWASWNIGVFICIRC. A compositionally biased stretch (basic and acidic residues) spans 161-172; that stretch reads VKMPQKKEETQQ. 2 disordered regions span residues 161-182 and 222-258; these read VKMP…KSTE and SRKV…AGKK.

In terms of assembly, may interact with clathrin heavy chains.

GTPase activating protein. May play a role in clathrin-dependent retrograde transport from early endosomes to the trans-Golgi network. This is Stromal membrane-associated protein 2 (SMAP2) from Gallus gallus (Chicken).